Here is a 283-residue protein sequence, read N- to C-terminus: Putative F-box protein At1g60370 (283 aa).

The F-box domain occupies 4–53; that stretch reads GEKLESIPIDLIIEIHSRLPAESVARFRCVSKLWGSMFRRPYFTELFLTR.

The polypeptide is Putative F-box protein At1g60370 (Arabidopsis thaliana (Mouse-ear cress)).